The chain runs to 921 residues: Respiratory burst oxidase homolog protein D (921 aa).

Residues 1–71 are disordered; sequence MKMRRGNSSN…RSNSVAGGRG (71 aa). Over 1–376 the chain is Cytoplasmic; sequence MKMRRGNSSN…KYFILDNWQR (376 aa). A phosphoserine mark is found at serine 8, serine 9, serine 26, and serine 39. Over residues 21 to 31 the composition is skewed to polar residues; it reads NSDTNSDTESI. The span at 44–53 shows a compositional bias: basic residues; that stretch reads RPKRASKKNA. EF-hand-like stretches follow at residues 193–203 and 230–241; these read SADSNGLLLSA and NNVSGDAITKEQ. EF-hand domains are found at residues 253–288 and 297–332; these read SFDA…SASA and QAKE…APNQ. Aspartate 266, aspartate 268, aspartate 270, arginine 272, and glutamate 277 together coordinate Ca(2+). Residues serine 339, serine 343, and serine 347 each carry the phosphoserine modification. A helical membrane pass occupies residues 377 to 397; it reads LWIMMLWLGICGGLFTYKFIQ. Residues 398-461 are Extracellular-facing; that stretch reads YKNKAAYGVM…FDDSLNFHKV (64 aa). The Ferric oxidoreductase domain occupies 415–572; it reads KGGAETLKFN…LFIIVYALLI (158 aa). Residues 462 to 482 form a helical membrane-spanning segment; that stretch reads IASGIVVGVLLHAGAHLTCDF. Residues 483–516 are Cytoplasmic-facing; it reads PRLIAADEDTYEPMEKYFGDQPTSYWWFVKGVEG. The helical transmembrane segment at 517-537 threads the bilayer; sequence WTGIVMVVLMAIAFTLATPWF. Residues 538–559 lie on the Extracellular side of the membrane; sequence RRNKLNLPNFLKKLTGFNAFWY. A helical transmembrane segment spans residues 560–580; it reads THHLFIIVYALLIVHGIKLYL. Residues 581-588 lie on the Cytoplasmic side of the membrane; sequence TKIWYQKT. Residues 589-606 form a helical membrane-spanning segment; sequence TWMYLAVPILLYASERLL. Residues 607 to 734 lie on the Extracellular side of the membrane; it reads RAFRSSIKPV…PYGAPAQDYK (128 aa). The region spanning 611–732 is the FAD-binding FR-type domain; that stretch reads SSIKPVKMIK…DGPYGAPAQD (122 aa). A helical membrane pass occupies residues 735–755; sequence KYDVVLLVGLGIGATPMISIL. Residues 756–921 lie on the Cytoplasmic side of the membrane; sequence KDIINNMKGP…TKFDFHKENF (166 aa).

The protein belongs to the RBOH (TC 5.B.1.3) family. Monomer and homodimer. Interacts with BIK1 and FLS2. Interacts with PBL13. Binds to SIK1 upon flagellin perception and becomes activated by phosphorylation. In terms of processing, phosphorylated at Ser-39, Ser-343 and Ser-347 by BIK1 upon flagellin (flg22) treatment. Activated by phosphorylation at Ser-347 mediated by SIK1 and at Ser-8, Ser-9 and Ser-339 upon flagellin (e.g. flg22) perception. In terms of tissue distribution, more abundant in roots than in leaves, stems or inflorescences. Expressed in mesophyll and guard cells.

The protein resides in the membrane. With respect to regulation, inhibited by diphenylene iodinium (DPI). Its function is as follows. Calcium-dependent NADPH oxidase that generates superoxide. Involved in the generation of reactive oxygen species (ROS) during incompatible interactions with pathogens, in response to pathogen-associated molecular pattern (PAMP)-triggered immunity (PTI) signaling and in UV-B and abscisic acid ROS-dependent signaling and via SIK1 mediated activation by phosphorylation. Might be required for ROS signal amplification during light stress. The polypeptide is Respiratory burst oxidase homolog protein D (Arabidopsis thaliana (Mouse-ear cress)).